Consider the following 274-residue polypeptide: Sulfur carrier protein FdhD (274 aa).

The active-site Cysteine persulfide intermediate is cysteine 121. 258–263 (FSKPGR) contacts Mo-bis(molybdopterin guanine dinucleotide).

This sequence belongs to the FdhD family.

The protein resides in the cytoplasm. Its function is as follows. Required for formate dehydrogenase (FDH) activity. Acts as a sulfur carrier protein that transfers sulfur from IscS to the molybdenum cofactor prior to its insertion into FDH. The sequence is that of Sulfur carrier protein FdhD from Yersinia pseudotuberculosis serotype IB (strain PB1/+).